The chain runs to 536 residues: L-ornithine N(5)-monooxygenase SIDA (536 aa).

Positions 1–25 (MSPHRETTGDESTTTTVPQNGTNGA) are disordered. Residues 115-123 (EKQTRFAWH) and Gln-134 each bind FAD. Lys-139 serves as a coordination point for L-ornithine. An FAD-binding site is contributed by Val-200. Arg-310 is a binding site for NADP(+). Residues 324–327 (NSIF) and Asn-354 contribute to the L-ornithine site. Residue 515 to 517 (TLL) participates in FAD binding. Ser-518 lines the L-ornithine pocket.

This sequence belongs to the lysine N(6)-hydroxylase/L-ornithine N(5)-oxygenase family. As to quaternary structure, homotetramer. Requires FAD as cofactor.

It carries out the reaction L-ornithine + NADH + O2 = N(5)-hydroxy-L-ornithine + NAD(+) + H2O. It catalyses the reaction L-ornithine + NADPH + O2 = N(5)-hydroxy-L-ornithine + NADP(+) + H2O. It functions in the pathway siderophore biosynthesis. Its function is as follows. L-ornithine N(5)-monooxygenase; part of the gene cluster that mediates the biosynthesis of at least 11 siderophores, including beauverichelin A, dimerumic acid (DA), Na-dimethyl coprogen (NADC), eleutherazine B, ferricrocin (FC), fusarinine A, fusarinine C (FsC), metachelin A, mevalonolactone, rhodotorulic acid (RA) and tenellin. This cocktail of siderophores for iron metabolism is essential for virulence, and more specifically for the fungal virulence in penetrating through the host cuticle. Siderophore synthesis is also involved in conidial germination under iron-deficient conditions. SIDA initiates the biosynthesis of these siderophores with the enzymatic hydroxylation of ornithine. SIDA is indispensable for the production of most siderophores including fusarinine C and ferricrocin but not mevalonolactone and eleutherazine B. However, SIDA mediates the metabolic interplay between synthesis of mevalonolactone and eleutherazine B and other siderophores. This Beauveria bassiana (strain ARSEF 2860) (White muscardine disease fungus) protein is L-ornithine N(5)-monooxygenase SIDA.